The primary structure comprises 863 residues: Receptor-like protein Cf-9 (863 aa).

A signal peptide spans 1–21 (MDCVKLVFLMLYTFLCQLALS). The Extracellular portion of the chain corresponds to 22 to 812 (SSLPHLCPED…EEDSPMISWQ (791 aa)). The interval 24–91 (LPHLCPEDQA…GVHCDETTGQ (68 aa)) is N-cap. Residues Asn-48, Asn-72, Asn-109, Asn-127, Asn-142, Asn-191, Asn-204, and Asn-212 are each glycosylated (N-linked (GlcNAc...) asparagine). The LRR 1; degenerate repeat unit spans residues 92–115 (VIALDLRCSQLQGKFHSNSSLFQL). LRR repeat units lie at residues 116–139 (SNLK…KFGE) and 141–164 (SNLT…ICHL). The stretch at 165 to 191 (SKLHVLRICDQYGLSLVPYNFELLLKN) is one LRR 4; degenerate repeat. LRR repeat units follow at residues 192 to 214 (LTQL…SNFS), 215 to 238 (SHLT…VFHL), 241 to 263 (LQSL…KWNS), 265 to 287 (ASLM…SFSH), 288 to 312 (LTSL…LWNL), 314 to 335 (NIVF…FTIF), 336 to 358 (EKLK…LSFN), 359 to 382 (TQLE…ISGL), 383 to 406 (QNLE…IFSL), 408 to 428 (SLVE…EFKS), 429 to 452 (KTLS…LLNQ), 454 to 476 (NLQL…ICNL), 477 to 500 (KTLI…VVER), 502 to 524 (EYLS…TFSV), 525 to 549 (GNIL…MINC), 551 to 572 (YLTL…WLGY), 573 to 597 (LFQL…GNTN), 599 to 623 (FMGL…ILGN), 667 to 690 (LDSN…IIGD), 691 to 714 (LVGL…SFQN), 715 to 739 (LSVL…LASL), and 741 to 759 (FLEV…IPKG). Residue Asn-262 is glycosylated (N-linked (GlcNAc...) asparagine). N-linked (GlcNAc...) asparagine glycosylation is found at Asn-300 and Asn-311. Residues Asn-378, Asn-396, and Asn-416 are each glycosylated (N-linked (GlcNAc...) asparagine). An N-linked (GlcNAc...) asparagine glycan is attached at Asn-464. Asn-519 carries an N-linked (GlcNAc...) asparagine glycan. Asn-563 is a glycosylation site (N-linked (GlcNAc...) asparagine). Residues Asn-698 and Asn-714 are each glycosylated (N-linked (GlcNAc...) asparagine). N-linked (GlcNAc...) asparagine glycosylation is found at Asn-746 and Asn-767. Residues 760-812 (KQFDSFGNTSYQGNDGLRGFPLSKLCGGEDQVTTPAELDQEEEEEDSPMISWQ) form a C-cap/acidic domain region. Residues 813–833 (GVLVGYGCGLVIGLSVIYIMW) traverse the membrane as a helical segment. Residues 834-863 (STQYPAWFSRMDLKLEHIITTKMKKHKKRY) lie on the Cytoplasmic side of the membrane.

Belongs to the RLP family. In terms of assembly, interacts with thioredoxin-like protein CITRX.

The protein localises to the cell membrane. Its function is as follows. Involved in plant defense. Confers resistance to the fungal pathogen C.fulvum through recognition of the AVR9 elicitor protein. The polypeptide is Receptor-like protein Cf-9 (Solanum pimpinellifolium (Currant tomato)).